A 556-amino-acid chain; its full sequence is Arginine--tRNA ligase (556 aa).

Positions 132-142 (ANPTGDLHLGH) match the 'HIGH' region motif.

The protein belongs to the class-I aminoacyl-tRNA synthetase family. Monomer.

The protein localises to the cytoplasm. The catalysed reaction is tRNA(Arg) + L-arginine + ATP = L-arginyl-tRNA(Arg) + AMP + diphosphate. The sequence is that of Arginine--tRNA ligase from Listeria monocytogenes serotype 4b (strain F2365).